A 475-amino-acid chain; its full sequence is Glycogen synthase (475 aa).

Lys-15 contributes to the ADP-alpha-D-glucose binding site.

Belongs to the glycosyltransferase 1 family. Bacterial/plant glycogen synthase subfamily.

It carries out the reaction [(1-&gt;4)-alpha-D-glucosyl](n) + ADP-alpha-D-glucose = [(1-&gt;4)-alpha-D-glucosyl](n+1) + ADP + H(+). Its pathway is glycan biosynthesis; glycogen biosynthesis. Functionally, synthesizes alpha-1,4-glucan chains using ADP-glucose. This chain is Glycogen synthase, found in Clostridium kluyveri (strain ATCC 8527 / DSM 555 / NBRC 12016 / NCIMB 10680 / K1).